A 263-amino-acid chain; its full sequence is Imidazole glycerol phosphate synthase subunit HisF (263 aa).

Active-site residues include aspartate 11 and aspartate 130.

Belongs to the HisA/HisF family. In terms of assembly, heterodimer of HisH and HisF.

Its subcellular location is the cytoplasm. The enzyme catalyses 5-[(5-phospho-1-deoxy-D-ribulos-1-ylimino)methylamino]-1-(5-phospho-beta-D-ribosyl)imidazole-4-carboxamide + L-glutamine = D-erythro-1-(imidazol-4-yl)glycerol 3-phosphate + 5-amino-1-(5-phospho-beta-D-ribosyl)imidazole-4-carboxamide + L-glutamate + H(+). It participates in amino-acid biosynthesis; L-histidine biosynthesis; L-histidine from 5-phospho-alpha-D-ribose 1-diphosphate: step 5/9. In terms of biological role, IGPS catalyzes the conversion of PRFAR and glutamine to IGP, AICAR and glutamate. The HisF subunit catalyzes the cyclization activity that produces IGP and AICAR from PRFAR using the ammonia provided by the HisH subunit. The protein is Imidazole glycerol phosphate synthase subunit HisF of Herpetosiphon aurantiacus (strain ATCC 23779 / DSM 785 / 114-95).